Here is a 376-residue protein sequence, read N- to C-terminus: Chaperone protein DnaJ (376 aa).

The 66-residue stretch at 4-69 (DFYETLGVQK…QKRAAYDRFG (66 aa)) folds into the J domain. The CR-type zinc finger occupies 133-211 (GKTAQIRVPA…CAGQGRVTEE (79 aa)). Residues Cys-146, Cys-149, Cys-163, Cys-166, Cys-185, Cys-188, Cys-199, and Cys-202 each coordinate Zn(2+). 4 CXXCXGXG motif repeats span residues 146 to 153 (CTECSGSG), 163 to 170 (CSMCHGHG), 185 to 192 (CPQCQGRG), and 199 to 206 (CPKCAGQG).

The protein belongs to the DnaJ family. As to quaternary structure, homodimer. The cofactor is Zn(2+).

It localises to the cytoplasm. In terms of biological role, participates actively in the response to hyperosmotic and heat shock by preventing the aggregation of stress-denatured proteins and by disaggregating proteins, also in an autonomous, DnaK-independent fashion. Unfolded proteins bind initially to DnaJ; upon interaction with the DnaJ-bound protein, DnaK hydrolyzes its bound ATP, resulting in the formation of a stable complex. GrpE releases ADP from DnaK; ATP binding to DnaK triggers the release of the substrate protein, thus completing the reaction cycle. Several rounds of ATP-dependent interactions between DnaJ, DnaK and GrpE are required for fully efficient folding. Also involved, together with DnaK and GrpE, in the DNA replication of plasmids through activation of initiation proteins. The chain is Chaperone protein DnaJ from Mesorhizobium japonicum (strain LMG 29417 / CECT 9101 / MAFF 303099) (Mesorhizobium loti (strain MAFF 303099)).